The following is a 457-amino-acid chain: D-hydantoinase (457 aa).

The Zn(2+) site is built by His-57 and His-59. Ser-69 is subject to Phosphoserine. Lys-148 is a Zn(2+) binding site. Lys-148 carries the N6-carboxylysine modification. Tyr-153 serves as a coordination point for substrate. His-181 and His-237 together coordinate Zn(2+). Thr-286 contributes to the substrate binding site. A Zn(2+)-binding site is contributed by Asp-313. A substrate-binding site is contributed by Asn-335.

It belongs to the metallo-dependent hydrolases superfamily. Hydantoinase/dihydropyrimidinase family. Homotetramer. The cofactor is Zn(2+). Carboxylation allows a single lysine to coordinate two zinc ions.

In terms of biological role, catalyzes the stereospecific hydrolysis of the cyclic amide bond of D-hydantoin derivatives. This Rhizobium radiobacter (Agrobacterium tumefaciens) protein is D-hydantoinase (hyuA).